The primary structure comprises 147 residues: Hemoglobin subunit delta (147 aa).

A Globin domain is found at 3 to 147 (HLTPEEKAAV…VATALAHKYH (145 aa)). 2 residues coordinate heme b: His64 and His93.

It belongs to the globin family. Heterotetramer of two delta chains and two alpha chains. In terms of tissue distribution, red blood cells.

The sequence is that of Hemoglobin subunit delta (HBD) from Ateles geoffroyi (Black-handed spider monkey).